We begin with the raw amino-acid sequence, 255 residues long: Ribosomal RNA large subunit methyltransferase E (255 aa).

Gly-50, Trp-52, Asp-68, Asp-84, and Asp-108 together coordinate S-adenosyl-L-methionine. Residue Lys-148 is the Proton acceptor of the active site. The TRAM domain maps to 195-253 (PVRSGEIYDVTVDSVGRTGDGIAMIQGFAVIVKNASPGERLRIKIGPVKQRFAFASILE).

Belongs to the class I-like SAM-binding methyltransferase superfamily. RNA methyltransferase RlmE family.

The protein localises to the cytoplasm. The enzyme catalyses uridine(2552) in 23S rRNA + S-adenosyl-L-methionine = 2'-O-methyluridine(2552) in 23S rRNA + S-adenosyl-L-homocysteine + H(+). Specifically methylates the uridine in position 2552 of 23S rRNA at the 2'-O position of the ribose in the fully assembled 50S ribosomal subunit. The protein is Ribosomal RNA large subunit methyltransferase E of Methanothrix thermoacetophila (strain DSM 6194 / JCM 14653 / NBRC 101360 / PT) (Methanosaeta thermophila).